The primary structure comprises 512 residues: PTS system mannitol-specific EIICB component (512 aa).

Residues 1 to 28 (MSQTEEKKGIGRRVQAFGSFLSSMIMPN) lie on the Cytoplasmic side of the membrane. The PTS EIIC type-2 domain occupies 17–349 (FGSFLSSMIM…MKFTREPKQD (333 aa)). A helical transmembrane segment spans residues 29–50 (IGAFIAWGFIAAIFIDNGWLPN). Over 51 to 54 (KDLA) the chain is Extracellular. The helical transmembrane segment at 55–75 (TLAGPMITYLIPLLIAFSGGR) threads the bilayer. Topologically, residues 76–139 (LIYDLRGGII…QGFEMLFNNF (64 aa)) are cytoplasmic. Residues 140 to 161 (SAGILGFIMTIAGFKILAPLMK) traverse the membrane as a helical segment. The Extracellular portion of the chain corresponds to 162–170 (FIMHILSVA). Residues 171 to 191 (VEALVHAHLLPLVSILVEPAK) traverse the membrane as a helical segment. At 192–278 (IVFLNNAINH…VLMRPLLFIA (87 aa)) the chain is on the cytoplasmic side. The chain crosses the membrane as a helical span at residues 279–298 (VILGGMTGVATYQATGFGFK). The Extracellular segment spans residues 299 to 318 (SPASPGSFIVYCLNAPRGEF). Residues 319 to 340 (LHMLLGVFLAALVSFVVAALIM) form a helical membrane-spanning segment. The Cytoplasmic portion of the chain corresponds to 341–512 (KFTREPKQDL…LNNLKKDDQA (172 aa)). Residues 355 to 402 (AQMENTKGKKSSVASKLVSSDKNVNTEENASGNVSETSSSDDDPEALL) are disordered. The span at 365 to 376 (SSVASKLVSSDK) shows a compositional bias: low complexity. Polar residues predominate over residues 380–392 (TEENASGNVSETS). The PTS EIIB type-2 domain maps to 419–512 (NHVIFACDAG…LNNLKKDDQA (94 aa)). Cys-425 acts as the Phosphocysteine intermediate; for EIIB activity in catalysis. A Phosphocysteine; by EIIA modification is found at Cys-425.

In terms of assembly, homodimer.

Its subcellular location is the cell membrane. The enzyme catalyses D-mannitol(out) + N(pros)-phospho-L-histidyl-[protein] = D-mannitol 1-phosphate(in) + L-histidyl-[protein]. In terms of biological role, the phosphoenolpyruvate-dependent sugar phosphotransferase system (sugar PTS), a major carbohydrate active transport system, catalyzes the phosphorylation of incoming sugar substrates concomitantly with their translocation across the cell membrane. The enzyme II CmtAB PTS system is involved in D-mannitol transport. This chain is PTS system mannitol-specific EIICB component (mtlA), found in Staphylococcus aureus (strain COL).